The primary structure comprises 320 residues: Aspartate carbamoyltransferase catalytic subunit (320 aa).

R53 and T54 together coordinate carbamoyl phosphate. K82 lines the L-aspartate pocket. R103, H131, and Q134 together coordinate carbamoyl phosphate. The L-aspartate site is built by R164 and R227. L266 and P267 together coordinate carbamoyl phosphate.

Belongs to the aspartate/ornithine carbamoyltransferase superfamily. ATCase family. Heterododecamer (2C3:3R2) of six catalytic PyrB chains organized as two trimers (C3), and six regulatory PyrI chains organized as three dimers (R2).

It carries out the reaction carbamoyl phosphate + L-aspartate = N-carbamoyl-L-aspartate + phosphate + H(+). It participates in pyrimidine metabolism; UMP biosynthesis via de novo pathway; (S)-dihydroorotate from bicarbonate: step 2/3. In terms of biological role, catalyzes the condensation of carbamoyl phosphate and aspartate to form carbamoyl aspartate and inorganic phosphate, the committed step in the de novo pyrimidine nucleotide biosynthesis pathway. This is Aspartate carbamoyltransferase catalytic subunit from Bifidobacterium adolescentis (strain ATCC 15703 / DSM 20083 / NCTC 11814 / E194a).